Consider the following 238-residue polypeptide: Ribonuclease PH (238 aa).

Phosphate is bound by residues R86 and 124–126; that span reads GTR.

The protein belongs to the RNase PH family. Homohexameric ring arranged as a trimer of dimers.

It catalyses the reaction tRNA(n+1) + phosphate = tRNA(n) + a ribonucleoside 5'-diphosphate. In terms of biological role, phosphorolytic 3'-5' exoribonuclease that plays an important role in tRNA 3'-end maturation. Removes nucleotide residues following the 3'-CCA terminus of tRNAs; can also add nucleotides to the ends of RNA molecules by using nucleoside diphosphates as substrates, but this may not be physiologically important. Probably plays a role in initiation of 16S rRNA degradation (leading to ribosome degradation) during starvation. The sequence is that of Ribonuclease PH from Geobacter sulfurreducens (strain ATCC 51573 / DSM 12127 / PCA).